Reading from the N-terminus, the 61-residue chain is Small ribosomal subunit protein uS14 (61 aa).

Positions 24, 27, 40, and 43 each coordinate Zn(2+).

It belongs to the universal ribosomal protein uS14 family. Zinc-binding uS14 subfamily. Part of the 30S ribosomal subunit. Contacts proteins S3 and S10. The cofactor is Zn(2+).

Its function is as follows. Binds 16S rRNA, required for the assembly of 30S particles and may also be responsible for determining the conformation of the 16S rRNA at the A site. The chain is Small ribosomal subunit protein uS14 from Anoxybacillus flavithermus (strain DSM 21510 / WK1).